Here is a 243-residue protein sequence, read N- to C-terminus: Type III pantothenate kinase (243 aa).

D6–K13 lines the ATP pocket. Substrate-binding positions include Y86 and G93–R96. The active-site Proton acceptor is D95. D116 is a binding site for K(+). Residue T119 coordinates ATP. T171 is a binding site for substrate.

The protein belongs to the type III pantothenate kinase family. Homodimer. It depends on NH4(+) as a cofactor. K(+) serves as cofactor.

The protein resides in the cytoplasm. The catalysed reaction is (R)-pantothenate + ATP = (R)-4'-phosphopantothenate + ADP + H(+). The protein operates within cofactor biosynthesis; coenzyme A biosynthesis; CoA from (R)-pantothenate: step 1/5. In terms of biological role, catalyzes the phosphorylation of pantothenate (Pan), the first step in CoA biosynthesis. The sequence is that of Type III pantothenate kinase from Bacteroides fragilis (strain YCH46).